The sequence spans 316 residues: DNA-directed RNA polymerase subunit alpha (316 aa).

Residues 1 to 232 (MSGNDLFPST…DLFNPLHHCS (232 aa)) form an alpha N-terminal domain (alpha-NTD) region. The segment at 247-316 (KINDILVEEL…LNIYLPKEKY (70 aa)) is alpha C-terminal domain (alpha-CTD).

The protein belongs to the RNA polymerase alpha chain family. As to quaternary structure, in plastids the minimal PEP RNA polymerase catalytic core is composed of four subunits: alpha, beta, beta', and beta''. When a (nuclear-encoded) sigma factor is associated with the core the holoenzyme is formed, which can initiate transcription.

It is found in the plastid. It localises to the chloroplast. It carries out the reaction RNA(n) + a ribonucleoside 5'-triphosphate = RNA(n+1) + diphosphate. In terms of biological role, DNA-dependent RNA polymerase catalyzes the transcription of DNA into RNA using the four ribonucleoside triphosphates as substrates. In Mesostigma viride (Green alga), this protein is DNA-directed RNA polymerase subunit alpha.